The sequence spans 44 residues: Non-structural protein 7b (44 aa).

Residues 9–29 (FYLCFLAFLLFLVLIMLLIFW) traverse the membrane as a helical segment.

The protein resides in the host membrane. The sequence is that of Non-structural protein 7b from Bat coronavirus HKU3 (BtCoV).